The primary structure comprises 1059 residues: Transmembrane protease serine 9 (1059 aa).

Residues 1-29 (MEPTVADVHLVPRTTKEVPALDAACCRAA) lie on the Cytoplasmic side of the membrane. The chain crosses the membrane as a helical; Signal-anchor for type II membrane protein span at residues 30–50 (SIGVVATSLVVLTLGVLLAFL). Topologically, residues 51–1059 (STQGFHVDHT…RGWIGQHIQE (1009 aa)) are extracellular. One can recognise an LDL-receptor class A domain in the interval 153–190 (RCPGNSFSCGNSQCVTKVNPECDDQEDCSDGSDEAHCE). 4 disulfide bridges follow: Cys-154/Cys-166, Cys-161/Cys-180, Cys-174/Cys-189, and Cys-228/Cys-244. A Peptidase S1 1 domain is found at 203–436 (IVGGMEASPG…LRDWILEATT (234 aa)). Catalysis depends on charge relay system residues His-243 and Asp-292. Disulfide bonds link Cys-326/Cys-393, Cys-358/Cys-372, and Cys-383/Cys-412. Ser-387 (charge relay system) is an active-site residue. The interval 443-469 (APTMAPAPAAPSTAWPTSPESPVVSTP) is disordered. The Peptidase S1 2 domain maps to 504 to 736 (VVGGFGAASG…LKGWILEIMS (233 aa)). A disulfide bridge links Cys-529 with Cys-545. Catalysis depends on His-544, which acts as the Charge relay system. Asn-547 carries N-linked (GlcNAc...) asparagine glycosylation. Catalysis depends on Asp-592, which acts as the Charge relay system. 3 cysteine pairs are disulfide-bonded: Cys-626–Cys-693, Cys-658–Cys-672, and Cys-683–Cys-712. Residues Asn-638 and Asn-663 are each glycosylated (N-linked (GlcNAc...) asparagine). The active-site Charge relay system is the Ser-687. Positions 758 to 814 (TTAGLTVPGATPSRPTPGAASRVTGQPANSTLSAVSTTARGQTPFPDAPEATTHTQL) are disordered. Polar residues predominate over residues 780–798 (VTGQPANSTLSAVSTTARG). The N-linked (GlcNAc...) asparagine glycan is linked to Asn-786. Residues 827–1058 (IVGGSAAGRG…VRGWIGQHIQ (232 aa)) enclose the Peptidase S1 3 domain. Intrachain disulfides connect Cys-853-Cys-869, Cys-949-Cys-1015, Cys-980-Cys-994, and Cys-1005-Cys-1034.

Belongs to the peptidase S1 family. Proteolytically cleaved to generate 3 independent serine protease chains. The cleaved chains may remain attached to the membrane thanks to disulfide bonds. It is unclear whether cleavage always takes place. As to expression, expressed in fetal human tissues, such as kidney, liver, lung and brain, and in a variety of tumor cell lines. Weakly expressed in adult tissues including skeletal muscle, liver, placenta and heart.

The protein resides in the cell membrane. Its activity is regulated as follows. Inhibited by serine protease inhibitors PMSF and 4-(2-aminoethyl)benzenesulfonyl fluoride, but not by EDTA. Serase-1 and serase-2 are serine proteases that hydrolyze the peptides N-t-Boc-Gln-Ala-Arg-AMC and N-t-Boc-Gln-Gly-Arg-AMC. In contrast, N-t-Boc-Ala-Phe-Lys-AMC and N-t-Boc-Ala-Pro-Ala-AMC are not significantly hydrolyzed. The chain is Transmembrane protease serine 9 (TMPRSS9) from Homo sapiens (Human).